A 282-amino-acid chain; its full sequence is Putative 4-diphosphocytidyl-2-C-methyl-D-erythritol kinase (282 aa).

K9 is a catalytic residue. P93 to T103 serves as a coordination point for ATP. D135 is an active-site residue.

It belongs to the GHMP kinase family. IspE subfamily.

The catalysed reaction is 4-CDP-2-C-methyl-D-erythritol + ATP = 4-CDP-2-C-methyl-D-erythritol 2-phosphate + ADP + H(+). Functionally, catalyzes the phosphorylation of the position 2 hydroxy group of 4-diphosphocytidyl-2C-methyl-D-erythritol. This chain is Putative 4-diphosphocytidyl-2-C-methyl-D-erythritol kinase, found in Staphylococcus saprophyticus subsp. saprophyticus (strain ATCC 15305 / DSM 20229 / NCIMB 8711 / NCTC 7292 / S-41).